Here is a 568-residue protein sequence, read N- to C-terminus: MASHVDLLTELQLLEKVPTLERLRAAQKRRAQQLKKWAQYEQDLLHRKRKHERKRSTGGRRKKVSFEASVALLEASLRNDAEEVRYFLKNKVSPDLCNEDGLTALHQCCIDNFEEIVKLLLSHGANVNAKDNELWTPLHAAATCGHINLVKILVQYGADLLAVNSDGNMPYDLCEDEPTLDVIETCMAYQGITQEKINEMRAAPEQKMISDIHCMIAAGQDLDWIDGQGATLLHIAGANGYLRAAELLLDHGVRVDVKDWDGWEPLHAAAFWGQMPMAELLVSHGASLSARTSMDEMPIDLCEEEEFKVLLLELKHKHDVIMKSQLRHKSSLSRRTSSAGSRGKVVRRASLSDRTNLYRKEYEGEAILWQQRSAAEDQRTSTYNGDIRETRTDQENKDPNPRLEKPVLLSEFSTKISRGELDGPVENGLRAPVSTYQYALANGDIWKMHEMPDYSMAYGNPGVADVPPPWSGFKEQSPQTLLELKRQRAAAKLLSHPFLSTHLGSSVARSGESSSEGKAPLIGGRTSPYSSNGTSVYYTVTSGDPPLLKFKAPMEEMEEKVHGCCRIS.

The stretch at 15 to 55 (EKVPTLERLRAAQKRRAQQLKKWAQYEQDLLHRKRKHERKR) forms a coiled coil. Ser69 bears the Phosphoserine mark. ANK repeat units lie at residues 100–129 (DGLT…NVNA), 133–162 (ELWT…DLLA), 228–257 (QGAT…RVDV), and 261–290 (DGWE…SLSA). Ser333, Ser337, and Ser350 each carry phosphoserine. Residues 373–403 (SAAEDQRTSTYNGDIRETRTDQENKDPNPRL) form a disordered region. Over residues 386–403 (DIRETRTDQENKDPNPRL) the composition is skewed to basic and acidic residues. Ser477 is subject to Phosphoserine. Low complexity predominate over residues 505 to 517 (SSVARSGESSSEG). A disordered region spans residues 505-527 (SSVARSGESSSEGKAPLIGGRTS). An ANK 5 repeat occupies 531–560 (SNGTSVYYTVTSGDPPLLKFKAPMEEMEEK). The S-palmitoyl cysteine moiety is linked to residue Cys564. Cysteine methyl ester is present on Cys565. The S-farnesyl cysteine moiety is linked to residue Cys565. Positions 566 to 568 (RIS) are cleaved as a propeptide — removed in mature form.

Interacts with PPP1CA, PPP1CB and MSN. Interacts (via its fourth ankyrin repeat) with the mature dimeric form of RPSA/LAMR1. Interacts with EEF1A1. Interacts with PTEN. Interacts with ECE1. In terms of processing, phosphorylated by PKA and, after PKA priming, by GSK3B. Phosphorylation by GSK3B reduces its association with PP1C and enhances PP1C activity. Dephosphorylation by its associated PP1C results in enhanced association with PP1C, but reduced PP1C activity.

It is found in the cell membrane. Its subcellular location is the nucleus. It localises to the cell projection. Its function is as follows. Regulator of protein phosphatase 1 (PP1) that acts as a positive regulator of pulmonary endothelial cell (EC) barrier function. Protects the endothelial barrier from lipopolysaccharide (LPS)-induced vascular leakage. Involved in the regulation of the PI3K/AKT signaling pathway. Involved in the regulation of angiogenesis and endothelial cell proliferation through the control of ECE1 dephosphorylation, trafficking and activity. Involved in the regulation of endothelial cell filopodia extension. May be a downstream target for TGF-beta1 signaling cascade in endothelial cells. Involved in PKA-mediated moesin dephosphorylation which is important in EC barrier protection against thrombin stimulation. Promotes the interaction of PPP1CA with RPSA/LAMR1 and in turn facilitates the dephosphorylation of RPSA/LAMR1. Involved in the dephosphorylation of EEF1A1. This Mus musculus (Mouse) protein is Protein phosphatase 1 regulatory inhibitor subunit 16B (Ppp1r16b).